A 104-amino-acid chain; its full sequence is MAMIKAQELVSSNSVVVFSKTFCPYCTSVKQLLNQLGAQFKVIELDSESDGSDLQNALAEWTGQRTVPNVFIGGKHIGGCDKTTGMHQEGKLIPLLTEAGAVKA.

Residues 3-103 (MIKAQELVSS…PLLTEAGAVK (101 aa)) form the Glutaredoxin domain. A disulfide bridge connects residues Cys-23 and Cys-26.

Belongs to the glutaredoxin family. CPYC subfamily.

The protein resides in the cytoplasm. Has a glutathione-disulfide oxidoreductase activity in the presence of NADPH and glutathione reductase. Reduces low molecular weight disulfides and proteins. This chain is Glutaredoxin, found in Vernicia fordii (Tung).